The following is a 527-amino-acid chain: Flagellar radial spoke protein 5 (527 aa).

Residues 1–22 (MSEPGEEPVAAPAGPAPDPVLN) are disordered. Residues 101–153 (RKWNELTIQAKQLEQEVAGLKGPDAEAKQAELENVKVQIADAEAAVAEVKQSF) adopt a coiled-coil conformation. Residues arginine 191 and arginine 366 each carry the asymmetric dimethylarginine modification.

Belongs to the aldo/keto reductase family. Post-translationally, asymmetrically dimethylated at Arg-191 and Arg-366 during flagellum resorption. Probably methylated by PRMT1.

The protein resides in the cytoplasm. It localises to the cytoskeleton. It is found in the flagellum axoneme. In terms of biological role, flagellar radial spokes contribute to the regulation of dynein arm activity and thus the pattern of flagellar bending. They consist of a thin stalk, which is attached to the a subfiber of the outer doublet microtubule, and a bulbous head, which is attached to the stalk and appears to interact with the projections from the central pair of microtubules. The sequence is that of Flagellar radial spoke protein 5 from Chlamydomonas reinhardtii (Chlamydomonas smithii).